The following is a 345-amino-acid chain: Linoleate 10R-lipoxygenase COP4 (345 aa).

Residues aspartate 87, aspartate 91, asparagine 222, serine 226, and glutamate 230 each contribute to the Mg(2+) site. Residues 87–91 (DEISD) carry the DDXXD motif motif.

Belongs to the terpene synthase family. The cofactor is Mg(2+).

The catalysed reaction is (2E,6E)-farnesyl diphosphate + H2O = cubebol + diphosphate. It catalyses the reaction (2E,6E)-farnesyl diphosphate = beta-copaene + diphosphate. It carries out the reaction (2E,6E)-farnesyl diphosphate = beta-cubebene + diphosphate. The enzyme catalyses (2E,6E)-farnesyl diphosphate = (+)-sativene + diphosphate. In terms of biological role, sesquiterpene synthase that catalyzes the cyclization of farnesyl diphosphate (FPP) into multiple products, including germacrene D, beta-copaene, beta-cubebene, (+)-sativene and cubebol, a natural sesquiterpene alcohol used in the food industry for its cooling and refreshing taste. Terpenoid hydrocarbons resulting from cyclization of farnesyl diphosphate are intermediates in the biosynthesis of biologically active compounds such as antibiotics, toxins and pheromones. This chain is Linoleate 10R-lipoxygenase COP4 (COP4), found in Coprinopsis cinerea (strain Okayama-7 / 130 / ATCC MYA-4618 / FGSC 9003) (Inky cap fungus).